The following is a 200-amino-acid chain: GTP cyclohydrolase 1 (200 aa).

3 residues coordinate Zn(2+): C87, H90, and C158.

Belongs to the GTP cyclohydrolase I family. In terms of assembly, toroid-shaped homodecamer, composed of two pentamers of five dimers.

The enzyme catalyses GTP + H2O = 7,8-dihydroneopterin 3'-triphosphate + formate + H(+). Its pathway is cofactor biosynthesis; 7,8-dihydroneopterin triphosphate biosynthesis; 7,8-dihydroneopterin triphosphate from GTP: step 1/1. The chain is GTP cyclohydrolase 1 from Xanthomonas axonopodis pv. citri (strain 306).